Here is a 157-residue protein sequence, read N- to C-terminus: Probable succinate transporter subunit YjjB (157 aa).

A run of 4 helical transmembrane segments spans residues 8 to 28 (LALA…AMVF), 50 to 70 (MILM…SMLV), 87 to 107 (VFTV…TAMI), and 129 to 149 (FLTA…PGLW).

It belongs to the ThrE exporter (TC 2.A.79) family. In terms of assembly, the transporter is composed of YjjB and YjjP.

The protein resides in the cell inner membrane. In terms of biological role, involved in succinate export with YjjP. Both proteins are required for export. This chain is Probable succinate transporter subunit YjjB, found in Escherichia coli O1:K1 / APEC.